The sequence spans 527 residues: Cytochrome P450 monooxyhenase eriA (527 aa).

Residues 17 to 37 (LGVVDLSLLGVGAVIAFAWLF) traverse the membrane as a helical segment. Asparagine 77, asparagine 274, and asparagine 297 each carry an N-linked (GlcNAc...) asparagine glycan. A heme-binding site is contributed by cysteine 453.

The protein belongs to the cytochrome P450 family. Requires heme as cofactor.

It localises to the membrane. It catalyses the reaction cyathadiol + reduced [NADPH--hemoprotein reductase] + O2 = cyathatriol + oxidized [NADPH--hemoprotein reductase] + H2O + H(+). The protein operates within secondary metabolite biosynthesis. Functionally, cytochrome P450 monooxygenase; part of the gene cluster that mediates the biosynthesis of erinacines, cyathane-xylosides that show unique biological activities, including leishmanicidal activity, stimulating activity for nerve growth-factor synthesis, and agonistic activity toward the kappa opioid receptor. Within the pathway, eriA catalyzes C-11 hydroxylation in the presence of the short chain dehydrogenase/reductase (SDR) eriH, which leads to the production of cyathatriol. The first step of the erinacines biosynthesis pathway is catalyzed by the geranylgeranyl diphosphate (GGPP) synthase eriE via conversion of farnesyl pyrophosphate and isopentyl pyrophosphate into geranylgeranyl pyrophosphate (GGPP). GGPP is then substrate of the diterpene cyclase eriG for the production of cyatha-3,12-diene. The cytochrome P450 monooxygenase eriI then hydroxylates cyatha-3,12-diene at C-14 of the seven-membered ring to produce erinacol, which is further hydroxylated at C-15 by the cytochrome P450 monooxygenase eriC to yield cyathadiol. The cytochrome P450 monooxygenase eriA then catalyzes C-11 hydroxylation in the presence of the short chain dehydrogenase/reductase (SDR) eriH, which leads to the production of cyathatriol. The acetyltransferase eriL converts cyathatriol into 11-O-acetyl-cyathatriol. The SDR eriH catalyzes further oxidation of 11-O-acetyl-cyathatriol into 1-O-acetylcyathin A3. Finally, the glycosyl transferase eriJ tranfers xylose from UDP-xylose onto C-14 of 11-O-acetyl-cyathatriol to form eracine Q. EriJ is also able to convert 11-O-acetyl-cyathatriol to eracine Q2 by using UDP-D-glucose as cosubstrate, but at a lower rate. In Hericium erinaceus (Lion's mane mushroom), this protein is Cytochrome P450 monooxyhenase eriA.